Consider the following 474-residue polypeptide: Glutathione synthetase (474 aa).

Arg-125 is a substrate binding site. Glu-144 serves as a coordination point for ATP. Positions 144 and 146 each coordinate Mg(2+). Substrate contacts are provided by residues 148–151 (IAAS), 214–216 (QRN), Gln-220, and 267–270 (RTGY). ATP contacts are provided by residues Lys-305, 364-373 (KPQREGGGNN), Tyr-375, 398-401 (MDKI), and Glu-425. Glu-368 lines the Mg(2+) pocket. Arg-450 contributes to the substrate binding site. ATP-binding residues include Lys-452 and Asp-458. 461-462 (VA) provides a ligand contact to substrate.

The protein belongs to the eukaryotic GSH synthase family. As to quaternary structure, homodimer. Mg(2+) is required as a cofactor. As to expression, expressed ubiquitously.

It carries out the reaction gamma-L-glutamyl-L-cysteine + glycine + ATP = glutathione + ADP + phosphate + H(+). The catalysed reaction is gamma-L-glutamyl-(2S)-2-aminobutanoate + glycine + ATP = ophthalmate + ADP + phosphate + H(+). It participates in sulfur metabolism; glutathione biosynthesis; glutathione from L-cysteine and L-glutamate: step 2/2. Its function is as follows. Catalyzes the production of glutathione from gamma-glutamylcysteine and glycine in an ATP-dependent manner. Glutathione (gamma-glutamylcysteinylglycine, GSH) is the most abundant intracellular thiol in living aerobic cells and is required for numerous processes including the protection of cells against oxidative damage, amino acid transport, the detoxification of foreign compounds, the maintenance of protein sulfhydryl groups in a reduced state and acts as a cofactor for a number of enzymes. Participates in ophthalmate biosynthesis in hepatocytes. The polypeptide is Glutathione synthetase (Xenopus laevis (African clawed frog)).